The sequence spans 381 residues: Acetylornithine deacetylase (381 aa).

Histidine 79 is a binding site for Zn(2+). The active site involves aspartate 81. Aspartate 111 contacts Zn(2+). Residue glutamate 143 is part of the active site. Zn(2+)-binding residues include glutamate 144, glutamate 168, and histidine 354.

Belongs to the peptidase M20A family. ArgE subfamily. As to quaternary structure, homodimer. The cofactor is Zn(2+). It depends on Co(2+) as a cofactor. Requires glutathione as cofactor.

It localises to the cytoplasm. It carries out the reaction N(2)-acetyl-L-ornithine + H2O = L-ornithine + acetate. The protein operates within amino-acid biosynthesis; L-arginine biosynthesis; L-ornithine from N(2)-acetyl-L-ornithine (linear): step 1/1. In terms of biological role, catalyzes the hydrolysis of the amide bond of N(2)-acetylated L-amino acids. Cleaves the acetyl group from N-acetyl-L-ornithine to form L-ornithine, an intermediate in L-arginine biosynthesis pathway, and a branchpoint in the synthesis of polyamines. This is Acetylornithine deacetylase from Buchnera aphidicola subsp. Acyrthosiphon pisum (strain Tuc7).